Here is a 303-residue protein sequence, read N- to C-terminus: Cytosolic-abundant heat soluble protein 3 (303 aa).

Positions 1–19 (MSSRQNQQSSSQHSSSSQQ) are enriched in low complexity. The interval 1–67 (MSSRQNQQSS…PGSHSEVHEE (67 aa)) is disordered. Residues 170 to 257 (ARQDEQDAGM…ESAKAQTNVN (88 aa)) adopt a coiled-coil conformation. 2 CAHS motif regions span residues 184–202 (YREE…LERQ) and 221–239 (QERE…LELE). The span at 270 to 280 (KGAIQTSADKS) shows a compositional bias: polar residues. Positions 270–303 (KGAIQTSADKSSTTKTGPTTVTQIKHTEQHTERR) are disordered. Over residues 282-291 (TTKTGPTTVT) the composition is skewed to low complexity. A compositionally biased stretch (basic and acidic residues) spans 294-303 (KHTEQHTERR).

This sequence belongs to the Cytosolic-abundant heat soluble protein (CAHS) family.

It is found in the cytoplasm. Functionally, CAHS proteins are cytosolic heat soluble proteins that seem to contribute to the anhydrobiosis in tardigrades, but their specific mechanisms are yet to be identified. It is possible that protection during anhydrobiosis might occur via the stabilization of vitrifying small molecules such as sugars, but not via the direct glass transition of CAHS proteins themselves. This chain is Cytosolic-abundant heat soluble protein 3, found in Ramazzottius varieornatus (Water bear).